Here is a 188-residue protein sequence, read N- to C-terminus: UPF0301 protein PsycPRwf_0144 (188 aa).

It belongs to the UPF0301 (AlgH) family.

The chain is UPF0301 protein PsycPRwf_0144 from Psychrobacter sp. (strain PRwf-1).